Here is a 188-residue protein sequence, read N- to C-terminus: UPF0340 protein BH3766 (188 aa).

It belongs to the UPF0340 family.

The protein is UPF0340 protein BH3766 of Halalkalibacterium halodurans (strain ATCC BAA-125 / DSM 18197 / FERM 7344 / JCM 9153 / C-125) (Bacillus halodurans).